Reading from the N-terminus, the 419-residue chain is Synaptosomal-associated protein 47 (419 aa).

2 consecutive t-SNARE coiled-coil homology domains span residues 109-171 (AANP…LTEL) and 356-418 (KDWP…MRKL).

It belongs to the SVAP1 family. As to quaternary structure, associates with the BLOC-1 complex. Interacts with BLOC1S6. Forms a complex containing SNAP47, VAMP2 and STX1A.

The protein localises to the endomembrane system. Its subcellular location is the cytoplasm. It localises to the perinuclear region. Its function is as follows. May play a role in intracellular membrane fusion. The chain is Synaptosomal-associated protein 47 (Snap47) from Rattus norvegicus (Rat).